A 402-amino-acid polypeptide reads, in one-letter code: Alkaline proteinase (402 aa).

The first 20 residues, 1-20 (MVTLRRLAVLLGAIPAALAA), serve as a signal peptide directing secretion. A propeptide spanning residues 21–120 (PTTQKREVVP…EQDEGEFSTA (100 aa)) is cleaved from the precursor. The Inhibitor I9 domain maps to 32–108 (KYIVTLKEGA…EVEEDQIWHL (77 aa)). The region spanning 128-402 (AWGLGTISHR…NRILYNGNGA (275 aa)) is the Peptidase S8 domain. Active-site charge relay system residues include Asp-160, His-191, and Ser-347. Residues 382–392 (GRVSNPGSGSP) are compositionally biased toward polar residues. The tract at residues 382–402 (GRVSNPGSGSPNRILYNGNGA) is disordered.

Belongs to the peptidase S8 family.

This is Alkaline proteinase (ALP) from Hapsidospora chrysogena (Acremonium chrysogenum).